The primary structure comprises 330 residues: 4-epi-cubebol synthase ((2E,6E)-farnesyl diphosphate cyclizing) (330 aa).

Mg(2+)-binding residues include Asp-91 and Glu-96. Positions 91–96 (DDAFCE) match the DDXXXE motif motif. Residue Arg-184 participates in substrate binding. The Mg(2+) site is built by Asn-230 and Ser-234. Substrate is bound at residue Lys-237. Residue Glu-238 coordinates Mg(2+). Residue 316–317 (RY) participates in substrate binding.

It belongs to the terpene synthase family. Mg(2+) serves as cofactor.

The enzyme catalyses (2E,6E)-farnesyl diphosphate + H2O = 4-epi-cubebol + diphosphate. It functions in the pathway secondary metabolite biosynthesis; terpenoid biosynthesis. Its function is as follows. Catalyzes the conversion of (2E,6E)-farnesyl diphosphate (FPP) to yield the bicyclic sesquiterpenol 4-epi-cubebol via a 1,10-cyclization, which requires the abstraction of the pyrophosphate from FPP to yield a (E,E)-germacradienyl cation. The only accepted substrate is (2E,6E)-farnesyl diphosphate (FPP). The chain is 4-epi-cubebol synthase ((2E,6E)-farnesyl diphosphate cyclizing) from Streptosporangium roseum (strain ATCC 12428 / DSM 43021 / JCM 3005 / KCTC 9067 / NCIMB 10171 / NRRL 2505 / NI 9100).